Reading from the N-terminus, the 419-residue chain is Tol-Pal system protein TolB (419 aa).

The N-terminal stretch at methionine 1–alanine 19 is a signal peptide.

Belongs to the TolB family. As to quaternary structure, the Tol-Pal system is composed of five core proteins: the inner membrane proteins TolA, TolQ and TolR, the periplasmic protein TolB and the outer membrane protein Pal. They form a network linking the inner and outer membranes and the peptidoglycan layer.

It is found in the periplasm. Its function is as follows. Part of the Tol-Pal system, which plays a role in outer membrane invagination during cell division and is important for maintaining outer membrane integrity. The chain is Tol-Pal system protein TolB from Legionella pneumophila (strain Corby).